The sequence spans 250 residues: MPIRNIAVGSHQEVYHPGALKAALAEFISTLIFVFAGQGSGMAFSKLTGGGATTPAGLIAAAVAHAFALFVAVSVGANISGGHVNPAVTFGAFVGGNITLFRGLLYWIAQLLGSTVACFLLRFSTGGLATGTFGLTGVSVWEALVLEIVMTFGLVYTVYATAVDPKKGSLGTIAPIAIGFIVGANILVGGAFDGASMNPAVSFGPALVSWSWESQWVYWVGPLIGGGLAGVIYEVLFISHTHEQLPTTDY.

Transmembrane regions (helical) follow at residues 25–44 (AEFISTLIFVFAGQGSGMAF) and 58–77 (LIAAAVAHAFALFVAVSVGA). Positions 85 to 87 (NPA) match the NPA 1 motif. The next 3 helical transmembrane spans lie at 103 to 121 (GLLYWIAQLLGSTVACFLL), 144 to 163 (LVLEIVMTFGLVYTVYATAV), and 170 to 192 (LGTIAPIAIGFIVGANILVGGAF). Positions 198-200 (NPA) match the NPA 2 motif. Residues 216–233 (WVYWVGPLIGGGLAGVIY) form a helical membrane-spanning segment.

This sequence belongs to the MIP/aquaporin (TC 1.A.8) family. TIP (TC 1.A.8.10) subfamily. As to expression, expressed in roots and leaves.

The protein localises to the vacuole membrane. Its function is as follows. Aquaporins facilitate the transport of water and small neutral solutes across cell membranes. May be involved in transport from the vacuolar compartment to the cytoplasm. This Oryza sativa subsp. japonica (Rice) protein is Probable aquaporin TIP1-1 (TIP1-1).